The following is a 76-amino-acid chain: Kappa-actitoxin-Avd4l (76 aa).

The signal sequence occupies residues 1 to 19 (MNKALFLCLVVLCAAVVFA). Positions 20-31 (AEDLQKAKHAPF) are excised as a propeptide. Intrachain disulfides connect Cys37/Cys72, Cys39/Cys65, and Cys55/Cys73.

Belongs to the sea anemone type 3 (BDS) potassium channel toxin family. Weakly expressed in the ectodermal tissue from the distal and proximal tentacles, body wall, and oral disk.

It is found in the secreted. The protein resides in the nematocyst. Functionally, blocks Kv3 voltage-gated potassium channels. Reduces blood pressure. The polypeptide is Kappa-actitoxin-Avd4l (Anemonia viridis (Snakelocks anemone)).